Consider the following 75-residue polypeptide: DNA-directed RNA polymerase subunit omega (75 aa).

The protein belongs to the RNA polymerase subunit omega family. As to quaternary structure, the RNAP catalytic core consists of 2 alpha, 1 beta, 1 beta' and 1 omega subunit. When a sigma factor is associated with the core the holoenzyme is formed, which can initiate transcription.

The enzyme catalyses RNA(n) + a ribonucleoside 5'-triphosphate = RNA(n+1) + diphosphate. Its function is as follows. Promotes RNA polymerase assembly. Latches the N- and C-terminal regions of the beta' subunit thereby facilitating its interaction with the beta and alpha subunits. In Lysinibacillus sphaericus (strain C3-41), this protein is DNA-directed RNA polymerase subunit omega.